The chain runs to 344 residues: Uroporphyrinogen decarboxylase (344 aa).

Substrate is bound by residues 25-29 (RQAGR), aspartate 75, tyrosine 152, serine 207, and histidine 323.

This sequence belongs to the uroporphyrinogen decarboxylase family. Homodimer.

It localises to the cytoplasm. It carries out the reaction uroporphyrinogen III + 4 H(+) = coproporphyrinogen III + 4 CO2. The protein operates within porphyrin-containing compound metabolism; protoporphyrin-IX biosynthesis; coproporphyrinogen-III from 5-aminolevulinate: step 4/4. Catalyzes the decarboxylation of four acetate groups of uroporphyrinogen-III to yield coproporphyrinogen-III. This is Uroporphyrinogen decarboxylase from Roseobacter denitrificans (strain ATCC 33942 / OCh 114) (Erythrobacter sp. (strain OCh 114)).